A 245-amino-acid chain; its full sequence is Phycocyanobilin:ferredoxin oxidoreductase (245 aa).

Belongs to the HY2 family.

It catalyses the reaction (2R,3Z)-phycocyanobilin + 4 oxidized [2Fe-2S]-[ferredoxin] = biliverdin IXalpha + 4 reduced [2Fe-2S]-[ferredoxin] + 4 H(+). Its function is as follows. Catalyzes the four-electron reduction of biliverdin IX-alpha (2-electron reduction at both the A and D rings); the reaction proceeds via an isolatable 2-electron intermediate, 181,182-dihydrobiliverdin. The sequence is that of Phycocyanobilin:ferredoxin oxidoreductase from Trichormus variabilis (strain ATCC 29413 / PCC 7937) (Anabaena variabilis).